Here is an 892-residue protein sequence, read N- to C-terminus: Gamma-tubulin small complex component GCP3 (892 aa).

Belongs to the TUBGCP family. Component of the gamma-tubulin small complex (gamma-TuSC) composed of tubulin gamma chain, gamma-tubulin complex protein 2 (GCP2) and gamma-tubulin complex protein 3 (GCP3). Interacts with tubulin gamma chain.

The protein localises to the cytoplasm. The protein resides in the cytoskeleton. It is found in the flagellum axoneme. It localises to the flagellum basal body. Functionally, component of the gamma-tubulin small complex (gamma-TuSC) involved in microtubule (MT) nucleation for the formation of median bodies and in the biogenesis of flagella. Gamma-TuSC may be required for the correct positioning of EB1 within the trophozoites. The sequence is that of Gamma-tubulin small complex component GCP3 from Giardia intestinalis (strain ATCC 50803 / WB clone C6) (Giardia lamblia).